The primary structure comprises 350 residues: Putative deoxyribonuclease-2 (350 aa).

Belongs to the DNase II family.

In Burkholderia pseudomallei (strain 1710b), this protein is Putative deoxyribonuclease-2.